The chain runs to 518 residues: Probable bifunctional methylthioribulose-1-phosphate dehydratase/enolase-phosphatase E1 (518 aa).

Positions 1 to 247 (MAAAPPAVAV…AIKLHQIGLD (247 aa)) are methylthioribulose-1-phosphate dehydratase. Cys-119 serves as a coordination point for substrate. Zn(2+) contacts are provided by His-137 and His-139. The Proton donor/acceptor; for methylthioribulose-1-phosphate dehydratase activity role is filled by Glu-162. Residue His-212 participates in Zn(2+) binding. Residues 279 to 518 (IVLDIEGTTT…FKTITSFAEI (240 aa)) form an enolase-phosphatase E1 region. Residues Asp-282 and Glu-284 each contribute to the Mg(2+) site. Residues 417–418 (SS) and Lys-451 each bind substrate. Asp-477 provides a ligand contact to Mg(2+).

In the N-terminal section; belongs to the aldolase class II family. MtnB subfamily. It in the C-terminal section; belongs to the HAD-like hydrolase superfamily. MasA/MtnC family. It depends on Zn(2+) as a cofactor. The cofactor is Mg(2+).

The enzyme catalyses 5-(methylsulfanyl)-D-ribulose 1-phosphate = 5-methylsulfanyl-2,3-dioxopentyl phosphate + H2O. The catalysed reaction is 5-methylsulfanyl-2,3-dioxopentyl phosphate + H2O = 1,2-dihydroxy-5-(methylsulfanyl)pent-1-en-3-one + phosphate. It functions in the pathway amino-acid biosynthesis; L-methionine biosynthesis via salvage pathway; L-methionine from S-methyl-5-thio-alpha-D-ribose 1-phosphate: step 2/6. The protein operates within amino-acid biosynthesis; L-methionine biosynthesis via salvage pathway; L-methionine from S-methyl-5-thio-alpha-D-ribose 1-phosphate: step 3/6. It participates in amino-acid biosynthesis; L-methionine biosynthesis via salvage pathway; L-methionine from S-methyl-5-thio-alpha-D-ribose 1-phosphate: step 4/6. This Populus trichocarpa (Western balsam poplar) protein is Probable bifunctional methylthioribulose-1-phosphate dehydratase/enolase-phosphatase E1.